Here is a 150-residue protein sequence, read N- to C-terminus: Large ribosomal subunit protein uL13 (150 aa).

It belongs to the universal ribosomal protein uL13 family. Part of the 50S ribosomal subunit.

This protein is one of the early assembly proteins of the 50S ribosomal subunit, although it is not seen to bind rRNA by itself. It is important during the early stages of 50S assembly. The protein is Large ribosomal subunit protein uL13 of Chlorobaculum parvum (strain DSM 263 / NCIMB 8327) (Chlorobium vibrioforme subsp. thiosulfatophilum).